We begin with the raw amino-acid sequence, 147 residues long: Hemoglobin subunit beta-H1 (147 aa).

Positions 3–147 constitute a Globin domain; that stretch reads HFTAEEKAAI…VANALSHKYH (145 aa). His-64 and His-93 together coordinate heme b.

The protein belongs to the globin family. In terms of assembly, heterotetramer of two alpha chains and two beta chains. As to expression, red blood cells.

Functionally, this is an embryonic beta-type chain. The chain is Hemoglobin subunit beta-H1 (Hbb-bh1) from Mus musculus (Mouse).